Here is a 926-residue protein sequence, read N- to C-terminus: G-protein coupled receptor family C group 6 member A (926 aa).

Residues 1 to 18 form the signal peptide; the sequence is MAFLIILITCFVIILATS. Residues 19–594 lie on the Extracellular side of the membrane; sequence QPCQTPDDFV…EYLNWNDSLA (576 aa). Asn-121, Asn-259, Asn-332, Asn-378, Asn-452, Asn-555, Asn-567, and Asn-590 each carry an N-linked (GlcNAc...) asparagine glycan. Residues 595-615 traverse the membrane as a helical segment; the sequence is ILLLILSLLGIIFVLVVGIIF. The Cytoplasmic segment spans residues 616–631; it reads TRNLNTPVVKSSGGLR. Residues 632-652 traverse the membrane as a helical segment; that stretch reads VCYVILLCHFLNFASTSFFIG. The Extracellular portion of the chain corresponds to 653–669; that stretch reads EPQDFTCKTRQTMFGVS. The helical transmembrane segment at 670 to 690 threads the bilayer; that stretch reads FTLCISCILTKSLKILLAFSF. Residues 691-704 lie on the Cytoplasmic side of the membrane; that stretch reads DPKLQKFLKCLYRP. Residues 705–725 form a helical membrane-spanning segment; the sequence is ILIIFTCTGIQVVICTLWLIF. The Extracellular segment spans residues 726-748; that stretch reads AAPTVEVNVSLPRVIILECEEGS. Asn-733 is a glycosylation site (N-linked (GlcNAc...) asparagine). The helical transmembrane segment at 749 to 769 threads the bilayer; the sequence is ILAFGTMLGYIAILAFICFIF. The Cytoplasmic segment spans residues 770 to 782; that stretch reads AFKGKYENYNEAK. Residues 783 to 803 form a helical membrane-spanning segment; the sequence is FITFGMLIYFIAWITFIPIYA. At 804 to 810 the chain is on the extracellular side; it reads TTFGKYV. The chain crosses the membrane as a helical span at residues 811 to 831; it reads PAVEIIVILISNYGILYCTFI. The Cytoplasmic portion of the chain corresponds to 832-926; that stretch reads PKCYVIICKQ…TLPRKRMSSI (95 aa).

Belongs to the G-protein coupled receptor 3 family. As to quaternary structure, homodimer; disulfide-linked. Isoform 1 is expressed at high level in brain, skeletal muscle, testis, bone, calvaria, osteoblasts and leukocytes. Expressed at intermediate level in liver, heart, kidney and spleen. Expressed at low level in lung, pancreas, placenta and ovary. Not detected in thymus, prostate, small intestine, tongue and colon. Isoform 1 and isoform 2 are expressed in kidney at the same level. Isoform 2 is expressed at lower level than isoform 1 in the other tissues.

It is found in the cell membrane. In terms of biological role, receptor activated by multiple ligands, including osteocalcin (BGLAP), basic amino acids, and various cations. Activated by amino acids with a preference for basic amino acids such as L-Lys, L-Arg and L-ornithine but also by small and polar amino acids. The L-alpha amino acids respond is augmented by divalent cations Ca(2+) and Mg(2+). Seems to act through a G(q)/G(11) and G(i)-coupled pathway. Regulates testosterone production by acting as a ligand for uncarboxylated osteocalcin hormone: osteocalcin-binding at the surface of Leydig cells initiates a signaling response that promotes the expression of enzymes required for testosterone synthesis in a CREB-dependent manner. Mediates the non-genomic effects of androgens in multiple tissue. May coordinate nutritional and hormonal anabolic signals through the sensing of extracellular amino acids, osteocalcin, divalent ions and its responsiveness to anabolic steroids. The sequence is that of G-protein coupled receptor family C group 6 member A (GPRC6A) from Homo sapiens (Human).